Here is a 443-residue protein sequence, read N- to C-terminus: Xaa-Pro dipeptidase (443 aa).

Positions 246, 257, 339, 384, and 423 each coordinate Mn(2+).

This sequence belongs to the peptidase M24B family. Bacterial-type prolidase subfamily. Mn(2+) is required as a cofactor.

The enzyme catalyses Xaa-L-Pro dipeptide + H2O = an L-alpha-amino acid + L-proline. In terms of biological role, splits dipeptides with a prolyl residue in the C-terminal position. The polypeptide is Xaa-Pro dipeptidase (Cronobacter sakazakii (strain ATCC BAA-894) (Enterobacter sakazakii)).